A 35-amino-acid chain; its full sequence is MSDIN-like toxin proprotein 1 (35 aa).

Residues 1 to 10 (MSDINATRLP) constitute a propeptide that is removed on maturation. The segment at residues 11 to 20 (IIIVLGLIIP) is a cross-link (cyclopeptide (Ile-Pro)). Residues 21-35 (LCVSDIEMILTRGER) constitute a propeptide that is removed on maturation.

Belongs to the MSDIN fungal toxin family. Post-translationally, processed by the macrocyclase-peptidase enzyme POPB to yield a toxic cyclic decapeptide. POPB first removes 10 residues from the N-terminus. Conformational trapping of the remaining peptide forces the enzyme to release this intermediate rather than proceed to macrocyclization. The enzyme rebinds the remaining peptide in a different conformation and catalyzes macrocyclization of the N-terminal 10 residues.

Functionally, probable toxin that belongs to the MSDIN-like toxin family responsible for a large number of food poisoning cases and deaths. This Amanita rimosa protein is MSDIN-like toxin proprotein 1.